Reading from the N-terminus, the 557-residue chain is MTDNNKYRDVEIRAPRGNKLTAKSWLTEAPLRMLMNNLDPQVAENPKELVVYGGIGRAARNWECYDKIVETLTRLEDDETLLVQSGKPVGVFKTHSNAPRVLIANSNLVPHWANWEHFNELDAKGLAMYGQMTAGSWIYIGSQGIVQGTYETFVEAGRQHYNGSLKGKWVLTAGLGGMGGAQPLAATLAGACSLNIECQQSRIDFRLETRYVDEQATDLDDALARIAKYTAEGKAISIALHGNAAEILPELVKRGVRPDMVTDQTSAHDPLNGYLPAGWTWEQYRDRAQTDPAAVVKAAKQSMAVHVKAMLDFQKQGIPTFDYGNNIRQMAKEEGVANAFDFPGFVPAYIRPLFCRGVGPFRWAALSGDAEDIYKTDAKVKELIPDDAHLHRWLDMARERISFQGLPARICWVGLGLRAKLGLAFNEMVRSGELSAPVVIGRDHLDSGSVSSPNRETEAMRDGSDAVSDWPLLNALLNTAGGATWVSLHHGGGVGMGFSQHSGMVIVCDGTDEAAERIARVLTNDPGTGVMRHADAGYQIAIDCAKEQGLDLPMITG.

Residues 53-54, glutamine 131, 177-179, glutamate 197, arginine 202, 243-244, 264-268, 274-275, and tyrosine 323 each bind NAD(+); these read GG, GMG, NA, QTSAH, and YL. Residue cysteine 411 is part of the active site. NAD(+) is bound at residue glycine 493.

The protein belongs to the urocanase family. NAD(+) serves as cofactor.

The protein resides in the cytoplasm. It carries out the reaction 4-imidazolone-5-propanoate = trans-urocanate + H2O. The protein operates within amino-acid degradation; L-histidine degradation into L-glutamate; N-formimidoyl-L-glutamate from L-histidine: step 2/3. Functionally, catalyzes the conversion of urocanate to 4-imidazolone-5-propionate. The polypeptide is Urocanate hydratase (Pseudomonas entomophila (strain L48)).